Reading from the N-terminus, the 199-residue chain is Elongation factor Ts (199 aa).

The segment at 81-84 (TDFV) is involved in Mg(2+) ion dislocation from EF-Tu.

It belongs to the EF-Ts family.

The protein localises to the cytoplasm. In terms of biological role, associates with the EF-Tu.GDP complex and induces the exchange of GDP to GTP. It remains bound to the aminoacyl-tRNA.EF-Tu.GTP complex up to the GTP hydrolysis stage on the ribosome. This is Elongation factor Ts from Thermotoga sp. (strain RQ2).